The sequence spans 330 residues: Biotin synthase 2 (330 aa).

Residues 48–278 (MCGDGFDMCS…QAAIRLAGGR (231 aa)) form the Radical SAM core domain. Positions 66, 70, and 73 each coordinate [4Fe-4S] cluster. [2Fe-2S] cluster-binding residues include Ser111, Cys143, Cys203, and Arg273.

Belongs to the radical SAM superfamily. Biotin synthase family. Homodimer. [4Fe-4S] cluster serves as cofactor. It depends on [2Fe-2S] cluster as a cofactor.

It catalyses the reaction (4R,5S)-dethiobiotin + (sulfur carrier)-SH + 2 reduced [2Fe-2S]-[ferredoxin] + 2 S-adenosyl-L-methionine = (sulfur carrier)-H + biotin + 2 5'-deoxyadenosine + 2 L-methionine + 2 oxidized [2Fe-2S]-[ferredoxin]. The protein operates within cofactor biosynthesis; biotin biosynthesis; biotin from 7,8-diaminononanoate: step 2/2. Its function is as follows. Catalyzes the conversion of dethiobiotin (DTB) to biotin by the insertion of a sulfur atom into dethiobiotin via a radical-based mechanism. The protein is Biotin synthase 2 of Corynebacterium diphtheriae (strain ATCC 700971 / NCTC 13129 / Biotype gravis).